The following is a 37-amino-acid chain: Potassium channel toxin alpha-KTx 1.11 (37 aa).

Cystine bridges form between Cys-7–Cys-28, Cys-13–Cys-33, and Cys-17–Cys-35.

The protein belongs to the short scorpion toxin superfamily. Potassium channel inhibitor family. Alpha-KTx 01 subfamily. Expressed by the venom gland.

It localises to the secreted. In terms of biological role, reversibly blocks the high conductance calcium-activated potassium channels composed of only alpha subunits (KCa1.1/KCNMA1). Unreversibly blocks the high conductance calcium-activated potassium channels composed of alpha and beta1 subunits (KCNMA1 and KCNMB1). Unreversibly and weakly blocks the high conductance calcium-activated potassium channels composed of alpha and beta4 (KCNMA1 and KCNMB4). In Centruroides noxius (Mexican scorpion), this protein is Potassium channel toxin alpha-KTx 1.11.